The following is a 697-amino-acid chain: Probable potassium transporter 4 (697 aa).

The Cytoplasmic portion of the chain corresponds to 1-29; that stretch reads MSSSHTVTVSMDVEAGQKNKDKKGISQDL. A helical membrane pass occupies residues 30–50; the sequence is ILAYKTLGVVFGGLVTSPLYV. The Extracellular segment spans residues 51–66; it reads YPSMNLTNPTEEDYLG. N55 is a glycosylation site (N-linked (GlcNAc...) asparagine). The helical transmembrane segment at 67-87 threads the bilayer; it reads IYSIMFWTLTLIGVVKYICIA. Topologically, residues 88 to 152 are cytoplasmic; the sequence is LNADDHGEGG…FIESSIIARR (65 aa). A helical membrane pass occupies residues 153–173; sequence LLLLTAILGMCMLIGDGILTP. Topologically, residues 174–189 are extracellular; sequence AISVLSAIDGLRGPFP. Residues 190 to 210 form a helical membrane-spanning segment; it reads SVSKPAVEGLSAAILVGLFLL. Residues 211 to 217 lie on the Cytoplasmic side of the membrane; that stretch reads QKYGTSK. A helical transmembrane segment spans residues 218 to 238; sequence VSFMFSPIMAAWTFATPVIGV. Topologically, residues 239 to 271 are extracellular; the sequence is YSIWRYYPGIFKAMSPHYIVRFFMTNQTRGWQL. N-linked (GlcNAc...) asparagine glycosylation occurs at N264. The helical transmembrane segment at 272–292 threads the bilayer; it reads LGGTVLCITGAEAMFADLGHF. Residues 293 to 300 lie on the Cytoplasmic side of the membrane; the sequence is SKRSIQIA. The chain crosses the membrane as a helical span at residues 301 to 321; it reads FMSSIYPSLVLTYAGQTAYLI. Residues 322-338 are Extracellular-facing; that stretch reads NNVDDFSDGFYKFVPRP. Residues 339-359 traverse the membrane as a helical segment; it reads VYWPMFIIATLAAIVASQSLI. Topologically, residues 360–390 are cytoplasmic; the sequence is SATFSVIKQSVVLDYFPRVKVVHTSKDKEGE. Residues 391-411 form a helical membrane-spanning segment; it reads VYSPETNYMLMLLCVGVILGF. Over 412 to 422 the chain is Extracellular; that stretch reads GDGKDIGNAFG. The helical transmembrane segment at 423–443 threads the bilayer; sequence VVVILVMLITTILLTLVMLII. Over 444–447 the chain is Cytoplasmic; it reads WGTH. The chain crosses the membrane as a helical span at residues 448–468; it reads VVLVALYLVPFLLLEATYVSA. Residues 469 to 475 are Extracellular-facing; sequence VCTKILR. Residues 476-496 traverse the membrane as a helical segment; the sequence is GGWVPFAVSVALAAVMFGWYY. The Cytoplasmic segment spans residues 497-697; sequence GRQRKTEYEA…RVEIGMLYKA (201 aa).

The protein belongs to the HAK/KUP transporter (TC 2.A.72.3) family.

It is found in the membrane. In terms of biological role, high-affinity potassium transporter. The sequence is that of Probable potassium transporter 4 (HAK4) from Oryza sativa subsp. japonica (Rice).